The primary structure comprises 299 residues: Phosphoribosylaminoimidazole-succinocarboxamide synthase (299 aa).

Belongs to the SAICAR synthetase family.

The catalysed reaction is 5-amino-1-(5-phospho-D-ribosyl)imidazole-4-carboxylate + L-aspartate + ATP = (2S)-2-[5-amino-1-(5-phospho-beta-D-ribosyl)imidazole-4-carboxamido]succinate + ADP + phosphate + 2 H(+). The protein operates within purine metabolism; IMP biosynthesis via de novo pathway; 5-amino-1-(5-phospho-D-ribosyl)imidazole-4-carboxamide from 5-amino-1-(5-phospho-D-ribosyl)imidazole-4-carboxylate: step 1/2. This is Phosphoribosylaminoimidazole-succinocarboxamide synthase (ade7) from Schizosaccharomyces pombe (strain 972 / ATCC 24843) (Fission yeast).